Reading from the N-terminus, the 1336-residue chain is Probable ATP-dependent DNA helicase HFM1 (1336 aa).

The Helicase ATP-binding domain maps to 159–347 (EHLLYSDRNF…WLSDENSPGV (189 aa)). 172–179 (APTGSGKT) lines the ATP pocket. The short motif at 280–283 (DEVH) is the DEAH box element. The region spanning 388-589 (NIIQTYSDGR…DVKVALEWIR (202 aa)) is the Helicase C-terminal domain. One can recognise an SEC63 domain in the interval 646 to 961 (PTETGKLMAL…GLDIQQSFNI (316 aa)). A C4-type zinc finger spans residues 1016-1031 (CNHNCKNKDACGHECC).

Belongs to the helicase family. SKI2 subfamily. It depends on Zn(2+) as a cofactor.

The enzyme catalyses Couples ATP hydrolysis with the unwinding of duplex DNA by translocating in the 3'-5' direction.. It carries out the reaction ATP + H2O = ADP + phosphate + H(+). Its function is as follows. Required for crossover formation and complete synapsis of homologous chromosomes during meiosis. In Xenopus tropicalis (Western clawed frog), this protein is Probable ATP-dependent DNA helicase HFM1 (hfm1).